Here is a 299-residue protein sequence, read N- to C-terminus: UPF0603 protein OsI_019212, chloroplastic (299 aa).

Composition is skewed to low complexity over residues 1-14 (METL…LSPL) and 22-36 (ASPA…SSPA). A chloroplast-targeting transit peptide spans 1–41 (METLLSPSTLLSPLRGSKKKPASPAASASSSSSSPARSVVS). Disordered stretches follow at residues 1-60 (METL…WRGD) and 244-265 (PDPG…TKEE). A thylakoid-targeting transit peptide spans 42-98 (CALRRQQPPPQAVAAWRGDGGRGGGVGSWATFLQHGLAAAALSLAISMAPAPAPAVA). A compositionally biased stretch (basic and acidic residues) spans 252–265 (KDNKRESNFKTKEE). The chain crosses the membrane as a helical span at residues 276–296 (VVGGLLVIAFVVPMAQYYAYI).

It belongs to the UPF0603 family.

The protein resides in the plastid. It localises to the chloroplast thylakoid membrane. The protein is UPF0603 protein OsI_019212, chloroplastic of Oryza sativa subsp. indica (Rice).